The primary structure comprises 159 residues: Cyclic pyranopterin monophosphate synthase (159 aa).

Residues 75–77 (LCH) and 113–114 (ME) contribute to the substrate site. Asp128 is a catalytic residue.

It belongs to the MoaC family. Homohexamer; trimer of dimers.

The enzyme catalyses (8S)-3',8-cyclo-7,8-dihydroguanosine 5'-triphosphate = cyclic pyranopterin phosphate + diphosphate. The protein operates within cofactor biosynthesis; molybdopterin biosynthesis. Its function is as follows. Catalyzes the conversion of (8S)-3',8-cyclo-7,8-dihydroguanosine 5'-triphosphate to cyclic pyranopterin monophosphate (cPMP). The sequence is that of Cyclic pyranopterin monophosphate synthase from Yersinia pseudotuberculosis serotype O:1b (strain IP 31758).